Consider the following 675-residue polypeptide: Rho GTPase-activating protein 40 (675 aa).

2 disordered regions span residues arginine 95–serine 118 and lysine 187–leucine 218. The segment covering serine 103 to alanine 116 has biased composition (acidic residues). One can recognise a Rho-GAP domain in the interval valine 323 to tryptophan 522.

Its function is as follows. GTPase activator for the Rho-type GTPases by converting them to an inactive GDP-bound state. The sequence is that of Rho GTPase-activating protein 40 from Homo sapiens (Human).